The chain runs to 242 residues: Ras-like protein family member 11A (242 aa).

Positions 17 to 241 are small GTPase-like; that stretch reads ESSSDYLLPK…SPKVKAPSAL (225 aa). GTP is bound by residues 34-41, 81-85, and 147-150; these read GAGRVGKS, DTPGG, and NKGD.

This sequence belongs to the small GTPase superfamily. Ras family. As to quaternary structure, interacts with UBF/UBTF. As to expression, widely expressed. Down-regulated in prostate tumors compared to normal prostate tissue. High levels found in colon tumor and normal colon tissue followed by small intestine, liver, jejunum, ileum, bladder and aorta. Lowest levels observed in endothelial cells.

The protein localises to the nucleus. Its subcellular location is the nucleolus. It catalyses the reaction GTP + H2O = GDP + phosphate + H(+). Its function is as follows. Regulator of rDNA transcription. Acts in cooperation UBF/UBTF and positively regulates RNA polymerase I transcription. In Homo sapiens (Human), this protein is Ras-like protein family member 11A.